A 331-amino-acid chain; its full sequence is UBX domain-containing protein 2B (331 aa).

2 stretches are compositionally biased toward basic and acidic residues: residues 1–16 and 37–48; these read MAEGGRAEPEEQERGS and DEMKCKSSKPDR. A disordered region spans residues 1-70; that stretch reads MAEGGRAEPE…PHRLYSGDHK (70 aa). An N-acetylalanine modification is found at alanine 2. A Phosphoserine modification is found at serine 56. Residue threonine 59 is modified to Phosphothreonine. The residue at position 66 (serine 66) is a Phosphoserine. One can recognise an SEP domain in the interval 141 to 206; sequence DVQVLLKLWR…MEDHQDQEYI (66 aa). Residues serine 231, serine 234, and serine 235 each carry the phosphoserine modification. Residues 252–329 enclose the UBX domain; the sequence is DSMPTTKIQI…DILNTVILQQ (78 aa).

This sequence belongs to the NSFL1C family. Interacts with VCP. Does not bind ubiquitin.

It is found in the nucleus. The protein localises to the cytoplasm. Its subcellular location is the cytosol. The protein resides in the endoplasmic reticulum. It localises to the golgi apparatus. It is found in the cytoskeleton. The protein localises to the microtubule organizing center. Its subcellular location is the centrosome. Functionally, adapter protein required for Golgi and endoplasmic reticulum biogenesis. Involved in Golgi and endoplasmic reticulum maintenance during interphase and in their reassembly at the end of mitosis. The complex formed with VCP has membrane fusion activity; membrane fusion activity requires USO1-GOLGA2 tethering and BET1L. VCPIP1 is also required, but not its deubiquitinating activity. Together with NSFL1C/p47, regulates the centrosomal levels of kinase AURKA/Aurora A during mitotic progression by promoting AURKA removal from centrosomes in prophase. Also, regulates spindle orientation during mitosis. The sequence is that of UBX domain-containing protein 2B (Ubxn2b) from Mus musculus (Mouse).